The sequence spans 116 residues: Putative transmembrane protein ORF116 (116 aa).

A run of 3 helical transmembrane segments spans residues 20 to 40, 53 to 73, and 76 to 96; these read IVTL…AYAL, LLGG…TNSI, and FRGA…DVIN.

It localises to the host membrane. This chain is Putative transmembrane protein ORF116, found in Acidianus bottle-shaped virus (isolate Italy/Pozzuoli) (ABV).